Consider the following 444-residue polypeptide: Maintenance of mitochondrial morphology protein 1 (444 aa).

Over residues 1-16 the composition is skewed to polar residues; that stretch reads MKGVENTLSQSESVNR. A disordered region spans residues 1–20; sequence MKGVENTLSQSESVNRGYNG. Residues 1 to 107 are Lumenal-facing; the sequence is MKGVENTLSQ…TFSSRSFAEG (107 aa). A helical transmembrane segment spans residues 108–128; it reads LVVGQLSVIVVLIFFIKFFIF. The Cytoplasmic portion of the chain corresponds to 129–444; it reads SDGPAKTGGG…QEEDPSRAPE (316 aa). Positions 136 to 157 are disordered; sequence GGGGGSSAESRSSGFTGSPLTS. Positions 142 to 157 are enriched in low complexity; it reads SAESRSSGFTGSPLTS. Positions 204 to 418 constitute an SMP-LTD domain; that stretch reads SPESLDWFNV…EPRFQFVKLP (215 aa). The tract at residues 425–444 is disordered; that stretch reads KNTREEKSDMQEEDPSRAPE. The span at 426-444 shows a compositional bias: basic and acidic residues; that stretch reads NTREEKSDMQEEDPSRAPE.

Belongs to the MMM1 family. Homodimer. Component of the ER-mitochondria encounter structure (ERMES) or MDM complex, composed of MMM1, MDM10, MDM12 and MDM34. An MMM1 homodimer associates with one molecule of MDM12 on each side in a pairwise head-to-tail manner, and the SMP-LTD domains of MMM1 and MDM12 generate a continuous hydrophobic tunnel for phospholipid trafficking.

The protein resides in the endoplasmic reticulum membrane. In terms of biological role, component of the ERMES/MDM complex, which serves as a molecular tether to connect the endoplasmic reticulum (ER) and mitochondria. Components of this complex are involved in the control of mitochondrial shape and protein biogenesis, and function in nonvesicular lipid trafficking between the ER and mitochondria. The MDM12-MMM1 subcomplex functions in the major beta-barrel assembly pathway that is responsible for biogenesis of all outer membrane beta-barrel proteins, and acts in a late step after the SAM complex. The MDM10-MDM12-MMM1 subcomplex further acts in the TOM40-specific pathway after the action of the MDM12-MMM1 complex. Essential for establishing and maintaining the structure of mitochondria and maintenance of mtDNA nucleoids. This Eremothecium gossypii (strain ATCC 10895 / CBS 109.51 / FGSC 9923 / NRRL Y-1056) (Yeast) protein is Maintenance of mitochondrial morphology protein 1.